The chain runs to 93 residues: UPF0223 protein gbs1030 (93 aa).

The protein belongs to the UPF0223 family.

The chain is UPF0223 protein gbs1030 from Streptococcus agalactiae serotype III (strain NEM316).